The sequence spans 370 residues: UDP-N-acetylglucosamine--N-acetylmuramyl-(pentapeptide) pyrophosphoryl-undecaprenol N-acetylglucosamine transferase (370 aa).

Residues 10 to 12 (TGG), N124, S196, I253, and Q298 each bind UDP-N-acetyl-alpha-D-glucosamine.

It belongs to the glycosyltransferase 28 family. MurG subfamily.

It localises to the cell membrane. It carries out the reaction Mur2Ac(oyl-L-Ala-gamma-D-Glu-L-Lys-D-Ala-D-Ala)-di-trans,octa-cis-undecaprenyl diphosphate + UDP-N-acetyl-alpha-D-glucosamine = beta-D-GlcNAc-(1-&gt;4)-Mur2Ac(oyl-L-Ala-gamma-D-Glu-L-Lys-D-Ala-D-Ala)-di-trans,octa-cis-undecaprenyl diphosphate + UDP + H(+). The protein operates within cell wall biogenesis; peptidoglycan biosynthesis. Functionally, cell wall formation. Catalyzes the transfer of a GlcNAc subunit on undecaprenyl-pyrophosphoryl-MurNAc-pentapeptide (lipid intermediate I) to form undecaprenyl-pyrophosphoryl-MurNAc-(pentapeptide)GlcNAc (lipid intermediate II). The chain is UDP-N-acetylglucosamine--N-acetylmuramyl-(pentapeptide) pyrophosphoryl-undecaprenol N-acetylglucosamine transferase from Limosilactobacillus reuteri subsp. reuteri (strain JCM 1112) (Lactobacillus reuteri).